A 128-amino-acid polypeptide reads, in one-letter code: Large ribosomal subunit protein bL17 (128 aa).

This sequence belongs to the bacterial ribosomal protein bL17 family. As to quaternary structure, part of the 50S ribosomal subunit. Contacts protein L32.

This Enterobacter sp. (strain 638) protein is Large ribosomal subunit protein bL17.